A 360-amino-acid chain; its full sequence is S-adenosylmethionine-dependent nucleotide dehydratase RSAD2 (360 aa).

Positions 44-71 are disordered; that stretch reads KGQPRVRGEPKETQETHEDPGSAQPTTP. Residues 49-63 are compositionally biased toward basic and acidic residues; it reads VRGEPKETQETHEDP. The Radical SAM core domain maps to 68 to 288; it reads PTTPVSVNYH…LQRHKDVSCL (221 aa). [4Fe-4S] cluster is bound by residues Cys-82, Cys-86, and Cys-89. An N6-acetyllysine modification is found at Lys-196. A Glycyl lysine isopeptide (Lys-Gly) (interchain with G-Cter in ubiquitin) cross-link involves residue Lys-205.

The protein belongs to the radical SAM superfamily. RSAD2 family. As to quaternary structure, homodimer. Interacts with IRAK1 and TRAF6. Interacts with FPPS. Interacts with HADHB. Interacts (via C-terminus) with VAPA/VAP33 (via C-terminus). Requires [4Fe-4S] cluster as cofactor. Acetylated by HAT1. HAT1-mediated acetylation of Lys-196 in turn recruits UBE4A that stimulates RSAD2 polyubiquitination leading to proteasomal degradation. Post-translationally, 'Lys-6'-linked polyubiquitination at Lys-205 leads to RSAD2 protein degradation. In neonatal rat tibia, specifically localized in cells of the periosteum, in osteoblasts lining endosteal and peristeal bone surfaces, to articular surfaces of cartilage and in perichondral cells but not in chondrocytes (at protein level). Expressed predominantly in bone marrow and spleen.

Its subcellular location is the endoplasmic reticulum membrane. It localises to the golgi apparatus. The protein resides in the endoplasmic reticulum. It is found in the lipid droplet. The protein localises to the mitochondrion. Its subcellular location is the mitochondrion inner membrane. It localises to the mitochondrion outer membrane. It carries out the reaction CTP + AH2 + S-adenosyl-L-methionine = 3'-deoxy-3',4'-didehydro-CTP + 5'-deoxyadenosine + L-methionine + A + H2O + H(+). Its activity is regulated as follows. IRAK1 and TRAF6 synergistically activate RSAD2 increasing its activity with CTP as substrate about 10-fold. Interferon-inducible antiviral protein which plays a major role in the cell antiviral state induced by type I and type II interferon. Catalyzes the conversion of cytidine triphosphate (CTP) to 3'-deoxy-3',4'-didehydro-CTP (ddhCTP) via a SAM-dependent radical mechanism. In turn, ddhCTP acts as a chain terminator for the RNA-dependent RNA polymerases from multiple viruses and directly inhibits viral replication. Therefore, inhibits a wide range of DNA and RNA viruses. Also promotes TLR7 and TLR9-dependent production of IFN-beta production in plasmacytoid dendritic cells (pDCs) by facilitating 'Lys-63'-linked ubiquitination of IRAK1 by TRAF6. Plays a role in CD4+ T-cells activation and differentiation. Facilitates T-cell receptor (TCR)-mediated GATA3 activation and optimal T-helper 2 (Th2) cytokine production by modulating NFKB1 and JUNB activities. Can inhibit secretion of soluble proteins. The sequence is that of S-adenosylmethionine-dependent nucleotide dehydratase RSAD2 from Rattus norvegicus (Rat).